The primary structure comprises 201 residues: Large ribosomal subunit protein uL4 (201 aa).

A disordered region spans residues 45-71 (AQKTRAEVTGSGKKPWRQKGTGRARAG).

This sequence belongs to the universal ribosomal protein uL4 family. In terms of assembly, part of the 50S ribosomal subunit.

Its function is as follows. One of the primary rRNA binding proteins, this protein initially binds near the 5'-end of the 23S rRNA. It is important during the early stages of 50S assembly. It makes multiple contacts with different domains of the 23S rRNA in the assembled 50S subunit and ribosome. Functionally, forms part of the polypeptide exit tunnel. The polypeptide is Large ribosomal subunit protein uL4 (Shewanella oneidensis (strain ATCC 700550 / JCM 31522 / CIP 106686 / LMG 19005 / NCIMB 14063 / MR-1)).